We begin with the raw amino-acid sequence, 63 residues long: Lysis protein (63 aa).

A helical membrane pass occupies residues 21 to 43; the sequence is LYVWIALAIVLSDFTSIFSHWIW.

The protein belongs to the Leviviricetes lysis protein family.

The protein localises to the host cell inner membrane. The protein resides in the host cell outer membrane. Functionally, induces the formation of specific membrane adhesion sites between the inner and outer membranes, apparently leading to host cell lysis. Lysis may be performed via activation of host murein hydrolases. This Escherichia coli (Bacteriophage JP34) protein is Lysis protein.